The primary structure comprises 347 residues: NADH-ubiquinone oxidoreductase chain 2 (347 aa).

10 helical membrane passes run 1-21 (MNPSIFIILLTTLILGTMMVI), 25-45 (HWLLAWIGFEMNMMAFIPIMM), 59-79 (YLLTQATASALLMMAVIINLM), 96-116 (TLMTVALAIKLGLAPFHFWVP), 122-142 (IPLTTGLILLTWQKLAPLSIL), 149-169 (INLYLMLTMSLLSILVGGWGG), 200-220 (LTLLNLLIYITMTFTMFMLFI), 239-259 (IITTLTMLTLLSMGGLPPLSG), 274-294 (DILIMPTFMAITALLNLYFYM), and 325-345 (LLPTAIVISTMLLPLTPMLSI).

Belongs to the complex I subunit 2 family. As to quaternary structure, core subunit of respiratory chain NADH dehydrogenase (Complex I) which is composed of 45 different subunits. Interacts with TMEM242.

The protein resides in the mitochondrion inner membrane. The catalysed reaction is a ubiquinone + NADH + 5 H(+)(in) = a ubiquinol + NAD(+) + 4 H(+)(out). Functionally, core subunit of the mitochondrial membrane respiratory chain NADH dehydrogenase (Complex I) which catalyzes electron transfer from NADH through the respiratory chain, using ubiquinone as an electron acceptor. Essential for the catalytic activity and assembly of complex I. The chain is NADH-ubiquinone oxidoreductase chain 2 from Balaenoptera musculus (Blue whale).